A 658-amino-acid polypeptide reads, in one-letter code: NUAK family SNF1-like kinase 1 (658 aa).

Met-1 bears the N-acetylmethionine mark. The disordered stretch occupies residues 1-53; that stretch reads MEGAAVSAAGDGPAVETGLPGSPLEAVAGATAAPVEPRKPHGVKRHHHKHNLK. A Phosphoserine modification is found at Ser-22. Basic residues predominate over residues 40-53; that stretch reads PHGVKRHHHKHNLK. Positions 56–307 constitute a Protein kinase domain; it reads YELQETLGKG…IEDIANHWWV (252 aa). Residues 62–70 and Lys-85 each bind ATP; that span reads LGKGTYGKV. The active-site Proton acceptor is Asp-179. Thr-212 carries the phosphothreonine; by LKB1 modification. 2 disordered regions span residues 353–422 and 441–568; these read LAKP…EGIV and IPLP…SYSR. Positions 378 to 393 are enriched in polar residues; sequence FPQSGQDSVPESPSKL. Positions 394–405 are enriched in basic residues; sequence SSKRPKGILKKR. The GILK motif signature appears at 400-403; that stretch reads GILK. A Phosphoserine modification is found at Ser-456. Over residues 519 to 530 the composition is skewed to basic residues; the sequence is SCRRKGILKHSS. Over residues 559 to 568 the composition is skewed to low complexity; sequence SDGISRSYSR. Ser-601 bears the Phosphoserine; by PKB/AKT1 mark.

It belongs to the protein kinase superfamily. CAMK Ser/Thr protein kinase family. SNF1 subfamily. Interacts (via GILK motif) with PPP1CB; the interaction is direct and bridges NUAK1 and PPP1R12A. Interacts with CDKN1A. The cofactor is Mg(2+). Post-translationally, phosphorylated at Thr-212 by STK11/LKB1 in complex with STE20-related adapter-alpha (STRADA) pseudo kinase and CAB39. Not dephosphorylated by the myosin PP1 complex when regulating its activity, due to the presence of PPP1R12A, which prevents myosin PP1 from dephosphorylating NUAK1. Phosphorylated by STK38L upon stimulation with IGF1. In terms of processing, ubiquitinated with 'Lys-29'- and 'Lys-33'-linked polyubiquitins which appear to impede LKB1-mediated phosphorylation. Deubiquitinated by USP9X. As to expression, expressed in the developing central nervous system, in epidermis, and some other tissues.

It is found in the nucleus. It localises to the cytoplasm. It carries out the reaction L-seryl-[protein] + ATP = O-phospho-L-seryl-[protein] + ADP + H(+). The catalysed reaction is L-threonyl-[protein] + ATP = O-phospho-L-threonyl-[protein] + ADP + H(+). Its activity is regulated as follows. Activated by phosphorylation on Thr-212. Activated by phosphorylation at Ser-601 AKT1 during glucose starvation; the relevance of such activation in normal cells is however unsure. Serine/threonine-protein kinase involved in various processes such as cell adhesion, regulation of cell ploidy and senescence, cell proliferation and tumor progression. Phosphorylates ATM, CASP6, LATS1, PPP1R12A and p53/TP53. Acts as a regulator of cellular senescence and cellular ploidy by mediating phosphorylation of 'Ser-464' of LATS1, thereby controlling its stability. Controls cell adhesion by regulating activity of the myosin protein phosphatase 1 (PP1) complex. Acts by mediating phosphorylation of PPP1R12A subunit of myosin PP1: phosphorylated PPP1R12A then interacts with 14-3-3, leading to reduced dephosphorylation of myosin MLC2 by myosin PP1. May be involved in DNA damage response: phosphorylates p53/TP53 at 'Ser-15' and 'Ser-392' and is recruited to the CDKN1A/WAF1 promoter to participate in transcription activation by p53/TP53. May also act as a tumor malignancy-associated factor by promoting tumor invasion and metastasis under regulation and phosphorylation by AKT1. Suppresses Fas-induced apoptosis by mediating phosphorylation of CASP6, thereby suppressing the activation of the caspase and the subsequent cleavage of CFLAR. Regulates UV radiation-induced DNA damage response mediated by CDKN1A. In association with STK11, phosphorylates CDKN1A in response to UV radiation and contributes to its degradation which is necessary for optimal DNA repair. The protein is NUAK family SNF1-like kinase 1 (Nuak1) of Mus musculus (Mouse).